Here is a 114-residue protein sequence, read N- to C-terminus: Nucleoid-associated protein Tlet_0999 (114 aa).

This sequence belongs to the YbaB/EbfC family. In terms of assembly, homodimer.

It localises to the cytoplasm. Its subcellular location is the nucleoid. Functionally, binds to DNA and alters its conformation. May be involved in regulation of gene expression, nucleoid organization and DNA protection. The protein is Nucleoid-associated protein Tlet_0999 of Pseudothermotoga lettingae (strain ATCC BAA-301 / DSM 14385 / NBRC 107922 / TMO) (Thermotoga lettingae).